Consider the following 21-residue polypeptide: Buforin-2 (21 aa).

N6-(2-hydroxyisobutyryl)lysine; alternate is present on Lys21.

It belongs to the histone H2A family. Expressed by the skin glands.

The protein resides in the secreted. In terms of biological role, antimicrobial peptide with potent activity against some Gram-positive and Gram-negative bacteria. Does not permeabilize membrane, but internalizes into bacterial cells and alter specific gene expression involved in bacterial resistance mechanisms. Has the ability to agglutinate E.coli, and lipid vesicles. Shows a weak hemolytic activity, and is not cytotoxic to monocytes. In Sphaenorhynchus lacteus (Orinoco lime treefrog), this protein is Buforin-2.